Consider the following 490-residue polypeptide: Pentatricopeptide repeat-containing protein At2g20710, mitochondrial (490 aa).

A mitochondrion-targeting transit peptide spans 1 to 86 (MKHLLLLRLV…IKMLRKFSRF (86 aa)). PPR repeat units follow at residues 138–172 (NYHLYGALLNCYASKKVLHKAEQVFQEMKELGFLK), 173–207 (GCLPYNVMLNLYVRTGKYTMVEKLLREMEDETVKP), 208–243 (DIFTVNTRLHAYSVVSDVEGMEKFLMRCEADQGLHL), 244–274 (DWRTYADTANGYIKAGLTEKALEMLRKSEQM), 280–310 (RKHAYEVLMSFYGAAGKKEEVYRLWSLYKEL), 314–344 (YNTGYISVISALLKMDDIEEVEKIMEEWEAG), 349–379 (DIRIPHLLITGYCKKGMMEKAEEVVNILVQK), and 384–421 (DTSTWERLALGYKMAGKMEKAVEKWKRAIEVSKPGWRP).

Belongs to the PPR family. P subfamily.

The protein localises to the mitochondrion. This chain is Pentatricopeptide repeat-containing protein At2g20710, mitochondrial, found in Arabidopsis thaliana (Mouse-ear cress).